The primary structure comprises 636 residues: Translation factor GUF1, mitochondrial (636 aa).

In terms of domain architecture, tr-type G spans serine 35–arginine 218. GTP contacts are provided by residues alanine 44–serine 51, aspartate 111–histidine 115, and asparagine 165–aspartate 168.

Belongs to the TRAFAC class translation factor GTPase superfamily. Classic translation factor GTPase family. LepA subfamily.

The protein localises to the mitochondrion inner membrane. The enzyme catalyses GTP + H2O = GDP + phosphate + H(+). Functionally, promotes mitochondrial protein synthesis. May act as a fidelity factor of the translation reaction, by catalyzing a one-codon backward translocation of tRNAs on improperly translocated ribosomes. Binds to mitochondrial ribosomes in a GTP-dependent manner. The protein is Translation factor GUF1, mitochondrial of Debaryomyces hansenii (strain ATCC 36239 / CBS 767 / BCRC 21394 / JCM 1990 / NBRC 0083 / IGC 2968) (Yeast).